The following is a 203-amino-acid chain: Peroxiredoxin (203 aa).

The region spanning 3 to 156 (VVLGQKAPDF…IIRVIKALQF (154 aa)) is the Thioredoxin domain. The active-site Cysteine sulfenic acid (-SOH) intermediate is the C44. R119 contributes to the substrate binding site.

This sequence belongs to the peroxiredoxin family. Prx6 subfamily. In terms of assembly, homodecamer. Pentamer of dimers that assemble into a ring structure.

The protein resides in the cytoplasm. It catalyses the reaction a hydroperoxide + [thioredoxin]-dithiol = an alcohol + [thioredoxin]-disulfide + H2O. Its function is as follows. Thiol-specific peroxidase that catalyzes the reduction of hydrogen peroxide and organic hydroperoxides to water and alcohols, respectively. Plays a role in cell protection against oxidative stress by detoxifying peroxides. The chain is Peroxiredoxin from Thermoplasma volcanium (strain ATCC 51530 / DSM 4299 / JCM 9571 / NBRC 15438 / GSS1).